The sequence spans 197 residues: Large ribosomal subunit protein uL10 (197 aa).

Residues 163–197 are disordered; that stretch reads GAPAAAEAPAAEESADSAAEAAAEAPAEAPAAEEN.

It belongs to the universal ribosomal protein uL10 family. As to quaternary structure, part of the ribosomal stalk of the 50S ribosomal subunit. The N-terminus interacts with L11 and the large rRNA to form the base of the stalk. The C-terminus forms an elongated spine to which L12 dimers bind in a sequential fashion forming a multimeric L10(L12)X complex.

Functionally, forms part of the ribosomal stalk, playing a central role in the interaction of the ribosome with GTP-bound translation factors. This Pseudarthrobacter chlorophenolicus (strain ATCC 700700 / DSM 12829 / CIP 107037 / JCM 12360 / KCTC 9906 / NCIMB 13794 / A6) (Arthrobacter chlorophenolicus) protein is Large ribosomal subunit protein uL10.